Here is a 316-residue protein sequence, read N- to C-terminus: Acetaldehyde dehydrogenase (316 aa).

Residue 11–14 (SGNI) participates in NAD(+) binding. Cys-131 (acyl-thioester intermediate) is an active-site residue. Residues 162–170 (SAGPGTRAN) and Asn-289 each bind NAD(+).

The protein belongs to the acetaldehyde dehydrogenase family. Interacts with MhpE.

The catalysed reaction is acetaldehyde + NAD(+) + CoA = acetyl-CoA + NADH + H(+). The protein operates within aromatic compound metabolism; 3-phenylpropanoate degradation. Functionally, catalyzes the conversion of acetaldehyde to acetyl-CoA, using NAD(+) and coenzyme A. Is the final enzyme in the meta-cleavage pathway for the degradation of aromatic compounds. The protein is Acetaldehyde dehydrogenase of Escherichia coli O81 (strain ED1a).